The chain runs to 150 residues: Large ribosomal subunit protein eL19 (150 aa).

Residues 55-89 are disordered; the sequence is IKGQSRYRAKIRHEQKKKGRHRGPGSRKGKKTARM.

It belongs to the eukaryotic ribosomal protein eL19 family. In terms of assembly, part of the 50S ribosomal subunit.

Functionally, binds to the 23S rRNA. This Pyrococcus furiosus (strain ATCC 43587 / DSM 3638 / JCM 8422 / Vc1) protein is Large ribosomal subunit protein eL19.